The following is a 376-amino-acid chain: GTPase Obg (376 aa).

The region spanning 1-158 (MFIDSVNLTL…RDVRLELKLI (158 aa)) is the Obg domain. In terms of domain architecture, OBG-type G spans 159 to 359 (ADVGLVGFPN…LKFSLLELLK (201 aa)). GTP-binding positions include 165-172 (GFPNVGKS), 190-194 (FTTLT), 212-215 (DIPG), 280-283 (TRMD), and 340-342 (SSA). Positions 172 and 192 each coordinate Mg(2+).

It belongs to the TRAFAC class OBG-HflX-like GTPase superfamily. OBG GTPase family. Monomer. The cofactor is Mg(2+).

The protein resides in the cytoplasm. Functionally, an essential GTPase which binds GTP, GDP and possibly (p)ppGpp with moderate affinity, with high nucleotide exchange rates and a fairly low GTP hydrolysis rate. Plays a role in control of the cell cycle, stress response, ribosome biogenesis and in those bacteria that undergo differentiation, in morphogenesis control. This chain is GTPase Obg, found in Campylobacter curvus (strain 525.92).